A 379-amino-acid polypeptide reads, in one-letter code: Chaperone protein DnaJ (379 aa).

One can recognise a J domain in the interval 7 to 72 (CYYETLEVER…DKRAAYDRYG (66 aa)). Residues 135 to 213 (GKTAQIEIPV…CTGSGRVTKE (79 aa)) form a CR-type zinc finger. Zn(2+) contacts are provided by C148, C151, C165, C168, C187, C190, C201, and C204. 4 CXXCXGXG motif repeats span residues 148–155 (CESCSGTG), 165–172 (CSTCGGAG), 187–194 (CPSCQGRG), and 201–208 (CPSCTGSG).

It belongs to the DnaJ family. In terms of assembly, homodimer. Zn(2+) is required as a cofactor.

It is found in the cytoplasm. In terms of biological role, participates actively in the response to hyperosmotic and heat shock by preventing the aggregation of stress-denatured proteins and by disaggregating proteins, also in an autonomous, DnaK-independent fashion. Unfolded proteins bind initially to DnaJ; upon interaction with the DnaJ-bound protein, DnaK hydrolyzes its bound ATP, resulting in the formation of a stable complex. GrpE releases ADP from DnaK; ATP binding to DnaK triggers the release of the substrate protein, thus completing the reaction cycle. Several rounds of ATP-dependent interactions between DnaJ, DnaK and GrpE are required for fully efficient folding. Also involved, together with DnaK and GrpE, in the DNA replication of plasmids through activation of initiation proteins. This is Chaperone protein DnaJ from Rhodopseudomonas palustris (strain HaA2).